The primary structure comprises 1110 residues: MTTCRRERPILTLLWILMATAGCLADLNEVPQVTVQPMSTVQKLGGTVILGCVVEPPWMNVTWRFNGKELNGSDDALGVFITRGTLVIAALNNHTVGRYQCVARMPAGAVASVPATVTLANLQDFKLDVQHVIEVDEGNTAVIACHLPESHPKAQVRYSVKQEWLEASRDNYLIMPSGNLQIVNASQEDEGMYKCAAYNPVTQEVKTSGSGDRLRVRRSTAEAARIIYPLEAQTVIVTKGQSLILECVASGIPPPRVTWAKDGSSIAAYNKTRFLLSNLLIDTTSEEDSGTYRCMASNGVGDPGAAVILYNVQVFEPPEVTVELSQLVIPWGQSAKLTCEVRGNPPPSVLWLRNAVPLTSSQRLRLSRRALRVVSVGPEDEGVYQCMAENAVGSAHAVVQLRTARPDTTLRPGRDTKPIAATPPMPPSRPSRPDQMLREQPGLVKPPTSSVQPTSLKCPGEEQVAPAEAPIILSSPRTSKTDSYELVWRPRHEGSSRTPILYYVVKHRKVTNSSDDWTISGIPANQHRLTLTRLDPGSLYEVEMAAYNCAGEGQTAMVTFRTGRRPKPEIVASKEQQIQRDDPGASLQSSSQPDHGRLSPPEAPDRPTISTASETSVYVTWIPRGNGGFPIQSFRVEYKKLKKVGDWILATSAIPPSRLSVEITGLEKGISYKFRVRALNMLGESEPSAPSRPYVVSGYSGRVYERPVAGPYITFTDAVNETTIMLKWMYIPASNNNTPIHGFYIYYRPTDSDNDSDYKKDMVEGDRYWHSISHLQPETSYDIKMQCFNEGGESEFSNVMICETKARKFSGQPGRPPPLTLAPPQPPPLETMERPVGTGAMVARASDLPYLIVGVVLGSIVLIIVTFIPFCLWRAWSKQKHTTDLGFPRSALLSSSCQYTMVPLEGLPGHQANGQPYLGGVSGRACVSRVHGSRGCPAATVGCPGRKPQQHCPGELAQQREDTNSQLRQPIVSNGYDLQNQQVARGPQCASGVGAFLYTLPDDSTHQLLQPQDCCHLQKQPVTTCQTAVRRTSESPGLESSWDPPYHSGPRCCLGLVPVEEVDSSDSCQVGGGDWSSQHPSGTYTGQERGMRFSPSPSVHVSFETPPPTI.

The first 25 residues, 1–25 (MTTCRRERPILTLLWILMATAGCLA), serve as a signal peptide directing secretion. Topologically, residues 26 to 850 (DLNEVPQVTV…MVARASDLPY (825 aa)) are extracellular. Ig-like C2-type domains lie at 31–118 (PQVT…ATVT), 124–208 (DFKL…VKTS), 229–310 (PLEA…VILY), and 318–402 (PEVT…VQLR). 4 disulfides stabilise this stretch: C52–C101, C145–C195, C247–C294, and C339–C386. N-linked (GlcNAc...) asparagine glycans are attached at residues N60, N71, N93, N184, and N270. The disordered stretch occupies residues 407-458 (DTTLRPGRDTKPIAATPPMPPSRPSRPDQMLREQPGLVKPPTSSVQPTSLKC). Residues 421-430 (ATPPMPPSRP) show a composition bias toward pro residues. 3 consecutive Fibronectin type-III domains span residues 469–566 (APII…GRRP), 603–698 (APDR…VVSG), and 707–807 (PVAG…TKAR). N-linked (GlcNAc...) asparagine glycosylation occurs at N512. Residues 561–610 (RTGRRPKPEIVASKEQQIQRDDPGASLQSSSQPDHGRLSPPEAPDRPTIS) form a disordered region. N720 and N754 each carry an N-linked (GlcNAc...) asparagine glycan. Residues 809–828 (FSGQPGRPPPLTLAPPQPPP) are disordered. A compositionally biased stretch (pro residues) spans 814 to 828 (GRPPPLTLAPPQPPP). A helical transmembrane segment spans residues 851–871 (LIVGVVLGSIVLIIVTFIPFC). Residues 872–1110 (LWRAWSKQKH…VSFETPPPTI (239 aa)) lie on the Cytoplasmic side of the membrane. The tract at residues 1065–1110 (SDSCQVGGGDWSSQHPSGTYTGQERGMRFSPSPSVHVSFETPPPTI) is disordered. The span at 1075–1086 (WSSQHPSGTYTG) shows a compositional bias: polar residues.

As to quaternary structure, part of a complex that contains BOC, CDON, NEO1, cadherins and CTNNB1. Interacts with SHH, DHH and IHH. Interacts with NTN3. Interacts with CDH2 and CTNNB1. Interacts with CDH15 only during the early stages of myoblast differentiation. Highly expressed in embryonic somites, limb buds, dermomyotomes and in the neural tube.

The protein resides in the membrane. Functionally, component of a cell-surface receptor complex that mediates cell-cell interactions between muscle precursor cells. Promotes differentiation of myogenic cells. This chain is Brother of CDO (Boc), found in Mus musculus (Mouse).